The chain runs to 78 residues: Small ribosomal subunit protein bS18 (78 aa).

It belongs to the bacterial ribosomal protein bS18 family. As to quaternary structure, part of the 30S ribosomal subunit. Forms a tight heterodimer with protein bS6.

Binds as a heterodimer with protein bS6 to the central domain of the 16S rRNA, where it helps stabilize the platform of the 30S subunit. This is Small ribosomal subunit protein bS18 from Beutenbergia cavernae (strain ATCC BAA-8 / DSM 12333 / CCUG 43141 / JCM 11478 / NBRC 16432 / NCIMB 13614 / HKI 0122).